Consider the following 192-residue polypeptide: Protein hunchback (192 aa).

Disordered regions lie at residues 16 to 59 (SHHH…SNTN), 88 to 108 (AAMT…WPGL), and 151 to 192 (ALTP…KYMA). Basic residues predominate over residues 17–31 (HHHHHHHAHHSRRQH). The span at 92-103 (PSPSNNDQNSPL) shows a compositional bias: polar residues. A compositionally biased stretch (basic and acidic residues) spans 173-192 (EPEKEHDLMSNSSEDMKYMA).

Belongs to the hunchback C2H2-type zinc-finger protein family.

The protein localises to the nucleus. Gap class segmentation protein that controls development of head structures. The polypeptide is Protein hunchback (hb) (Drosophila adiastola (Fruit fly)).